A 142-amino-acid chain; its full sequence is Lysozyme 2 (142 aa).

Residues 1 to 20 (MLKLTLTILAAVLLVTPAFG) form the signal peptide. One can recognise a C-type lysozyme domain in the interval 21 to 142 (KVYTRCSLAR…HTLPSIDDCF (122 aa)). 4 disulfides stabilise this stretch: Cys-26–Cys-141, Cys-47–Cys-131, Cys-82–Cys-98, and Cys-94–Cys-112. Residue Glu-52 is part of the active site. A glycan (N-linked (GlcNAc...) asparagine) is linked at Asn-66. The active site involves Asp-70.

It belongs to the glycosyl hydrolase 22 family. In terms of tissue distribution, expressed only in the midgut where it is concentrated around the middle in all larval stages.

It localises to the secreted. The enzyme catalyses Hydrolysis of (1-&gt;4)-beta-linkages between N-acetylmuramic acid and N-acetyl-D-glucosamine residues in a peptidoglycan and between N-acetyl-D-glucosamine residues in chitodextrins.. In terms of biological role, lysozymes have primarily a bacteriolytic function. Shows antibacterial activity against Gram-positive bacterium M.luteus but shows no activity against Gram-negative bacterium E.coli. Likely to play a role in the eradication of ingested pathogens during their passage through the intestine. The chain is Lysozyme 2 from Lucilia sericata (Green bottle fly).